A 209-amino-acid polypeptide reads, in one-letter code: Ribonuclease HII (209 aa).

In terms of domain architecture, RNase H type-2 spans 18–209 (GLVAGVDEVG…FKPVKALLER (192 aa)). A divalent metal cation contacts are provided by aspartate 24, glutamate 25, and aspartate 116.

Belongs to the RNase HII family. The cofactor is Mn(2+). It depends on Mg(2+) as a cofactor.

The protein localises to the cytoplasm. It carries out the reaction Endonucleolytic cleavage to 5'-phosphomonoester.. In terms of biological role, endonuclease that specifically degrades the RNA of RNA-DNA hybrids. The chain is Ribonuclease HII from Shewanella sp. (strain MR-7).